Reading from the N-terminus, the 256-residue chain is Small ribosomal subunit protein eS1 (256 aa).

N-acetylalanine; partial is present on Ala-2.

This sequence belongs to the eukaryotic ribosomal protein eS1 family. In terms of assembly, component of the small ribosomal subunit. Mature ribosomes consist of a small (40S) and a large (60S) subunit. The 40S subunit contains about 33 different proteins and 1 molecule of RNA (18S). The 60S subunit contains about 49 different proteins and 3 molecules of RNA (25S, 5.8S and 5S).

The protein resides in the cytoplasm. This is Small ribosomal subunit protein eS1 from Lachancea thermotolerans (strain ATCC 56472 / CBS 6340 / NRRL Y-8284) (Yeast).